We begin with the raw amino-acid sequence, 96 residues long: UPF0235 protein YpsIP31758_0827 (96 aa).

It belongs to the UPF0235 family.

The polypeptide is UPF0235 protein YpsIP31758_0827 (Yersinia pseudotuberculosis serotype O:1b (strain IP 31758)).